A 487-amino-acid chain; its full sequence is N-succinylglutamate 5-semialdehyde dehydrogenase (487 aa).

221–226 (GSSDTG) serves as a coordination point for NAD(+). Catalysis depends on residues Glu244 and Cys278.

Belongs to the aldehyde dehydrogenase family. AstD subfamily.

It carries out the reaction N-succinyl-L-glutamate 5-semialdehyde + NAD(+) + H2O = N-succinyl-L-glutamate + NADH + 2 H(+). It participates in amino-acid degradation; L-arginine degradation via AST pathway; L-glutamate and succinate from L-arginine: step 4/5. Its function is as follows. Catalyzes the NAD-dependent reduction of succinylglutamate semialdehyde into succinylglutamate. In Burkholderia mallei (strain ATCC 23344), this protein is N-succinylglutamate 5-semialdehyde dehydrogenase.